The following is a 486-amino-acid chain: Glutamyl-tRNA(Gln) amidotransferase subunit A (486 aa).

Residues lysine 75 and serine 150 each act as charge relay system in the active site. Serine 174 acts as the Acyl-ester intermediate in catalysis.

The protein belongs to the amidase family. GatA subfamily. In terms of assembly, heterotrimer of A, B and C subunits.

The catalysed reaction is L-glutamyl-tRNA(Gln) + L-glutamine + ATP + H2O = L-glutaminyl-tRNA(Gln) + L-glutamate + ADP + phosphate + H(+). In terms of biological role, allows the formation of correctly charged Gln-tRNA(Gln) through the transamidation of misacylated Glu-tRNA(Gln) in organisms which lack glutaminyl-tRNA synthetase. The reaction takes place in the presence of glutamine and ATP through an activated gamma-phospho-Glu-tRNA(Gln). The polypeptide is Glutamyl-tRNA(Gln) amidotransferase subunit A (Nostoc punctiforme (strain ATCC 29133 / PCC 73102)).